The sequence spans 122 residues: Cofilin/actin-depolymerizing factor homolog 1 (122 aa).

The ADF-H domain occupies 4–122 (GIRVNDNCVT…ESAQDVADLK (119 aa)).

It belongs to the actin-binding proteins ADF family. Interacts with monomeric actin, does not bind to actin polymers.

It localises to the cytoplasm. Its subcellular location is the cytoskeleton. Not involved in actin polymerisation, instead functions to stimulate nucleotide exchange on monomeric actin and influence turnover of the small amount of cytosolic actin microfilaments. Essential for erythrocytic schizogony. This chain is Cofilin/actin-depolymerizing factor homolog 1, found in Plasmodium falciparum (isolate 3D7).